We begin with the raw amino-acid sequence, 373 residues long: Dual-specificity RNA methyltransferase RlmN (373 aa).

Catalysis depends on Glu-91, which acts as the Proton acceptor. Residues 97 to 339 (EDDRGTLCIS…TTVRKTRGDD (243 aa)) form the Radical SAM core domain. A disulfide bridge connects residues Cys-104 and Cys-344. [4Fe-4S] cluster contacts are provided by Cys-111, Cys-115, and Cys-118. Residues 165-166 (GE), Ser-197, 219-221 (SLH), and Asn-301 each bind S-adenosyl-L-methionine. Cys-344 acts as the S-methylcysteine intermediate in catalysis.

The protein belongs to the radical SAM superfamily. RlmN family. [4Fe-4S] cluster serves as cofactor.

The protein localises to the cytoplasm. The catalysed reaction is adenosine(2503) in 23S rRNA + 2 reduced [2Fe-2S]-[ferredoxin] + 2 S-adenosyl-L-methionine = 2-methyladenosine(2503) in 23S rRNA + 5'-deoxyadenosine + L-methionine + 2 oxidized [2Fe-2S]-[ferredoxin] + S-adenosyl-L-homocysteine. The enzyme catalyses adenosine(37) in tRNA + 2 reduced [2Fe-2S]-[ferredoxin] + 2 S-adenosyl-L-methionine = 2-methyladenosine(37) in tRNA + 5'-deoxyadenosine + L-methionine + 2 oxidized [2Fe-2S]-[ferredoxin] + S-adenosyl-L-homocysteine. Specifically methylates position 2 of adenine 2503 in 23S rRNA and position 2 of adenine 37 in tRNAs. m2A2503 modification seems to play a crucial role in the proofreading step occurring at the peptidyl transferase center and thus would serve to optimize ribosomal fidelity. This chain is Dual-specificity RNA methyltransferase RlmN, found in Paracidovorax citrulli (strain AAC00-1) (Acidovorax citrulli).